A 176-amino-acid polypeptide reads, in one-letter code: Ribosome rescue factor SmrB (176 aa).

The Smr domain maps to 93-168; sequence LDLHGYRQSE…GDAALLVLID (76 aa).

This sequence belongs to the SmrB family. Associates with collided ribosomes, but not with correctly translating polysomes.

Its function is as follows. Acts as a ribosome collision sensor. Detects stalled/collided disomes (pairs of ribosomes where the leading ribosome is stalled and a second ribosome has collided with it) and endonucleolytically cleaves mRNA at the 5' boundary of the stalled ribosome. Stalled/collided disomes form a new interface (primarily via the 30S subunits) that binds SmrB. Cleaved mRNA becomes available for tmRNA ligation, leading to ribosomal subunit dissociation and rescue of stalled ribosomes. The protein is Ribosome rescue factor SmrB of Shewanella sp. (strain ANA-3).